The chain runs to 82 residues: Sec-independent protein translocase protein TatA (82 aa).

Residues 1 to 21 (MGGISVWQLLIIAVIVVLLFG) traverse the membrane as a helical segment. The tract at residues 41–82 (KAMSEDEPAKKDDKDADFEPKSLEEQQKKEAAPESKKDKEQA) is disordered. The span at 42–82 (AMSEDEPAKKDDKDADFEPKSLEEQQKKEAAPESKKDKEQA) shows a compositional bias: basic and acidic residues.

This sequence belongs to the TatA/E family. The Tat system comprises two distinct complexes: a TatABC complex, containing multiple copies of TatA, TatB and TatC subunits, and a separate TatA complex, containing only TatA subunits. Substrates initially bind to the TatABC complex, which probably triggers association of the separate TatA complex to form the active translocon.

Its subcellular location is the cell inner membrane. In terms of biological role, part of the twin-arginine translocation (Tat) system that transports large folded proteins containing a characteristic twin-arginine motif in their signal peptide across membranes. TatA could form the protein-conducting channel of the Tat system. This chain is Sec-independent protein translocase protein TatA, found in Vibrio campbellii (strain ATCC BAA-1116).